The sequence spans 1299 residues: DNA-directed RNA polymerase subunit beta' (1299 aa).

The Zn(2+) site is built by Cys60, Cys62, Cys75, and Cys78. 3 residues coordinate Mg(2+): Asp535, Asp537, and Asp539. Zn(2+)-binding residues include Cys877, Cys954, Cys961, and Cys964.

Belongs to the RNA polymerase beta' chain family. As to quaternary structure, the RNAP catalytic core consists of 2 alpha, 1 beta, 1 beta' and 1 omega subunit. When a sigma factor is associated with the core the holoenzyme is formed, which can initiate transcription. It depends on Mg(2+) as a cofactor. Requires Zn(2+) as cofactor.

The catalysed reaction is RNA(n) + a ribonucleoside 5'-triphosphate = RNA(n+1) + diphosphate. DNA-dependent RNA polymerase catalyzes the transcription of DNA into RNA using the four ribonucleoside triphosphates as substrates. The protein is DNA-directed RNA polymerase subunit beta' of Paenarthrobacter aurescens (strain TC1).